Reading from the N-terminus, the 274-residue chain is Large ribosomal subunit protein uL2c (274 aa).

Disordered stretches follow at residues 1 to 22 (MAIHLYKTSTPSTRNGAVDSQV) and 225 to 254 (PVDHPHGGGEGRAPIGRKKPVTPWGYPALG).

This sequence belongs to the universal ribosomal protein uL2 family. Part of the 50S ribosomal subunit.

The protein resides in the plastid. It localises to the chloroplast. The polypeptide is Large ribosomal subunit protein uL2c (rpl2) (Sinapis alba (White mustard)).